The chain runs to 81 residues: Photosystem I iron-sulfur center (81 aa).

2 4Fe-4S ferredoxin-type domains span residues 2-31 (SHSVKIYDTCIGCTQCVRACPTDVLEMIPW) and 39-68 (IASAPRTEDCVGCKRCESACPTDFLSVRVY). [4Fe-4S] cluster contacts are provided by Cys11, Cys14, Cys17, Cys21, Cys48, Cys51, Cys54, and Cys58.

In terms of assembly, the eukaryotic PSI reaction center is composed of at least 11 subunits. It depends on [4Fe-4S] cluster as a cofactor.

The protein resides in the plastid. The protein localises to the chloroplast thylakoid membrane. The catalysed reaction is reduced [plastocyanin] + hnu + oxidized [2Fe-2S]-[ferredoxin] = oxidized [plastocyanin] + reduced [2Fe-2S]-[ferredoxin]. Its function is as follows. Apoprotein for the two 4Fe-4S centers FA and FB of photosystem I (PSI); essential for photochemical activity. FB is the terminal electron acceptor of PSI, donating electrons to ferredoxin. The C-terminus interacts with PsaA/B/D and helps assemble the protein into the PSI complex. Required for binding of PsaD and PsaE to PSI. PSI is a plastocyanin-ferredoxin oxidoreductase, converting photonic excitation into a charge separation, which transfers an electron from the donor P700 chlorophyll pair to the spectroscopically characterized acceptors A0, A1, FX, FA and FB in turn. The polypeptide is Photosystem I iron-sulfur center (Sorghum bicolor (Sorghum)).